The chain runs to 163 residues: Lipoprotein signal peptidase (163 aa).

Helical transmembrane passes span 9–29 (YLAI…SALS), 39–59 (VLPF…SFLA), 67–87 (WFFT…LYKS), and 92–112 (LLCI…LDRV). Residues aspartate 119 and aspartate 137 contribute to the active site. The chain crosses the membrane as a helical span at residues 130 to 150 (WPAFNIADSAICVGAALIIWG).

Belongs to the peptidase A8 family.

It localises to the cell inner membrane. It carries out the reaction Release of signal peptides from bacterial membrane prolipoproteins. Hydrolyzes -Xaa-Yaa-Zaa-|-(S,diacylglyceryl)Cys-, in which Xaa is hydrophobic (preferably Leu), and Yaa (Ala or Ser) and Zaa (Gly or Ala) have small, neutral side chains.. It participates in protein modification; lipoprotein biosynthesis (signal peptide cleavage). Functionally, this protein specifically catalyzes the removal of signal peptides from prolipoproteins. This is Lipoprotein signal peptidase from Polynucleobacter necessarius subsp. necessarius (strain STIR1).